Here is a 424-residue protein sequence, read N- to C-terminus: Kynureninase (424 aa).

Pyridoxal 5'-phosphate contacts are provided by residues L106, T107, 134–137 (FPSD), D219, H222, and Y244. N6-(pyridoxal phosphate)lysine is present on K245. W274 and N302 together coordinate pyridoxal 5'-phosphate.

Belongs to the kynureninase family. Homodimer. The cofactor is pyridoxal 5'-phosphate.

It catalyses the reaction L-kynurenine + H2O = anthranilate + L-alanine + H(+). It carries out the reaction 3-hydroxy-L-kynurenine + H2O = 3-hydroxyanthranilate + L-alanine + H(+). Its pathway is amino-acid degradation; L-kynurenine degradation; L-alanine and anthranilate from L-kynurenine: step 1/1. It functions in the pathway cofactor biosynthesis; NAD(+) biosynthesis; quinolinate from L-kynurenine: step 2/3. Catalyzes the cleavage of L-kynurenine (L-Kyn) and L-3-hydroxykynurenine (L-3OHKyn) into anthranilic acid (AA) and 3-hydroxyanthranilic acid (3-OHAA), respectively. The polypeptide is Kynureninase (Xanthomonas campestris pv. campestris (strain 8004)).